Reading from the N-terminus, the 236-residue chain is Sorulation-regulated protein 2 (236 aa).

Positions 1 to 20 (MLGLYLSSLFFAFFMAQVFA) are cleaved as a signal peptide. Asn-155, Asn-160, Asn-203, and Asn-212 each carry an N-linked (GlcNAc...) asparagine glycan. The GPI-anchor amidated asparagine moiety is linked to residue Asn-212. Positions 213 to 236 (SSSSLMPSMGILSFLFGLYLLLHP) are cleaved as a propeptide — removed in mature form.

Post-translationally, the GPI-anchor is attached to the protein in the endoplasmic reticulum and serves to target the protein to the cell surface. There, the glucosamine-inositol phospholipid moiety is cleaved off and the GPI-modified mannoprotein is covalently attached via its lipidless GPI glycan remnant to the 1,6-beta-glucan of the outer cell wall layer. N-glycosylated.

It localises to the spore wall. The protein resides in the secreted. The protein localises to the cell wall. Its subcellular location is the membrane. This chain is Sorulation-regulated protein 2, found in Saccharomyces cerevisiae (strain ATCC 204508 / S288c) (Baker's yeast).